Reading from the N-terminus, the 954-residue chain is Calsyntenin-1 (954 aa).

The signal sequence occupies residues 1–25 (MRIRGVKPFASAVGLLLGLLYAVDA). Residues 26–833 (AKVNKHKPWI…THQASVVPSA (808 aa)) lie on the Extracellular side of the membrane. 2 consecutive Cadherin domains span residues 35 to 151 (IETT…SPVF) and 152 to 252 (KEKS…KPSW). N-linked (GlcNAc...) asparagine glycans are attached at residues asparagine 333, asparagine 353, and asparagine 552. A helical membrane pass occupies residues 834–854 (ATIVIVVCVSFLVFMIILGVF). Residues 855–954 (RIRAAHQRTM…LEWDDSTLTY (100 aa)) lie on the Cytoplasmic side of the membrane. The interval 891–954 (TYEDQHSSEE…LEWDDSTLTY (64 aa)) is disordered. Over residues 900–935 (EEGDEEEEESEDGEEEDDITSAESDSSEDEAGEQED) the composition is skewed to acidic residues.

It belongs to the calsyntenin family. In terms of assembly, homooligomer and heterooligomer; mediates both homophilic and heterophilc interactions with clstn2 and clstn3 paralogs via cadherin domains. In terms of tissue distribution, by 48 hours post-fertilization (hpf), widely expressed in the brain, with strong expression in the telencephalon and the midbrain.

Its subcellular location is the postsynaptic cell membrane. The protein resides in the endoplasmic reticulum membrane. It is found in the golgi apparatus membrane. It localises to the cell projection. The protein localises to the neuron projection. Postsynaptic adhesion molecule involved in vesicle trafficking; required for branching of peripheral but not central axons of sensory neurons. Promotes synapse development by acting as a cell adhesion molecule at the postsynaptic membrane, which associates with presynaptic neurexins. This chain is Calsyntenin-1, found in Danio rerio (Zebrafish).